Reading from the N-terminus, the 511-residue chain is Maturase K (511 aa).

Belongs to the intron maturase 2 family. MatK subfamily.

It localises to the plastid. Its subcellular location is the chloroplast. Usually encoded in the trnK tRNA gene intron. Probably assists in splicing its own and other chloroplast group II introns. This Brachypodium distachyon (Purple false brome) protein is Maturase K.